Consider the following 649-residue polypeptide: Outer dense fiber protein 2 (649 aa).

The interval 1-65 (MKNRSPSPPL…TKVPWIPPGK (65 aa)) is disordered. Coiled coils occupy residues 137-219 (QKRE…AETD), 247-426 (DINL…LEML), and 464-649 (EVAV…NCAL). The interval 339 to 358 (SEVSKSIESTKAHLQGQLRT) is disordered.

Belongs to the ODF2 family. In terms of assembly, self-associates. Associates with microtubules and forms a fibrillar structure partially linked to the microtubule network.

Its subcellular location is the cytoplasm. The protein resides in the cytoskeleton. It localises to the microtubule organizing center. It is found in the centrosome. The protein localises to the cell projection. Its subcellular location is the cilium. The protein resides in the centriole. It localises to the spindle pole. It is found in the flagellum. Functionally, seems to be a major form of sperm tail outer dense fibers. This Xenopus laevis (African clawed frog) protein is Outer dense fiber protein 2 (odf2).